A 463-amino-acid chain; its full sequence is Putative pentatricopeptide repeat-containing protein At4g17915 (463 aa).

PPR repeat units follow at residues 12 to 46 (STRLLNICVDSLCKFRKLEKAESLIIDGIRLGVDP), 47 to 81 (DVVTYNTLISGYCRFVGIEEAYAVTRRMRDAGIRP), 82 to 116 (DVATYNSLIAGAARRLMLDHVLYLFDEMLEWGIYP), 117 to 152 (DLWSYNTLMCCYFKLGKHEEAFRVLYKDLQLAGLNP), 153 to 186 (GPDTYNVLLDALCKCGYIDNALELFKEMQSRFKP), 187 to 221 (ELMTYNILINGLCKSRRVGTAKWMLTELKKSGYTP), 222 to 256 (NAVTYTTILKLYFKTRRIRRGLQLFLEMKREGYTY), 257 to 291 (DGYAYFAVVSALIKTGRTKEAYEYMQELVRKGRRH), 292 to 326 (DIVSYNTLLNLYFKDGNLDAVDDLLGEIERRGMKA), 327 to 361 (DEYTHTIIVNGLLRTGQTRRAEEHFVSMGEMGIGL), 362 to 392 (NLVTCNCLVDGLCKAGHVDRAMRYFESMEVK), and 393 to 427 (DEYTYTSVVHNLCKDMRFVCASKLLLSCYNKGIKI).

This sequence belongs to the PPR family. P subfamily.

The sequence is that of Putative pentatricopeptide repeat-containing protein At4g17915 from Arabidopsis thaliana (Mouse-ear cress).